Here is a 333-residue protein sequence, read N- to C-terminus: MTSTPAEAKITVMAVHAHPDDETLWTGLALAKARRLGHDVAVVTCTLGEEGEVIGEKYQALVDAQQYEQGTGMLGGYRIAELQRALGALGVQHGPNFLGGCGTWRDSGMEGSESIRHPRAFAREVEPAQDLLDAQVEQLIQQIQSIRPEVILTYAADGGYGHPDHKQAHRIVHEAVQRLSGASAEGAGADVFVPSQVLWCVTEDEKFAKGMQGLEDDPTAVPEGWTLPAAGEIATVPSAEVDLVIHGSAEDVAAKQAAMRAHATQIWVADGTASDVNAQVRESNPPAPSATTLFCLSNLITQPLLDSESYRLGWTAPGVPEDFFARALAEQMV.

Residues His-18, Asp-21, and His-165 each coordinate Zn(2+).

The protein belongs to the MshB deacetylase family. The cofactor is Zn(2+).

The catalysed reaction is 1D-myo-inositol 2-acetamido-2-deoxy-alpha-D-glucopyranoside + H2O = 1D-myo-inositol 2-amino-2-deoxy-alpha-D-glucopyranoside + acetate. Its function is as follows. Catalyzes the deacetylation of 1D-myo-inositol 2-acetamido-2-deoxy-alpha-D-glucopyranoside (GlcNAc-Ins) in the mycothiol biosynthesis pathway. The polypeptide is 1D-myo-inositol 2-acetamido-2-deoxy-alpha-D-glucopyranoside deacetylase (Corynebacterium jeikeium (strain K411)).